The chain runs to 719 residues: Protein Hook homolog 2 (719 aa).

Residues 1–161 (MSVDKAELCG…ELMTKDTPDS (161 aa)) are required for localization to the centrosome and induction of aggresome formation. Residues 1–548 (MSVDKAELCG…LKRKLEEHLQ (548 aa)) are sufficient for interaction with microtubules. The 117-residue stretch at 6-122 (AELCGSLLTW…KLLQLVLGCA (117 aa)) folds into the Calponin-homology (CH) domain. Serine 163 carries the post-translational modification Phosphoserine. 2 coiled-coil regions span residues 180–427 (LSEE…AQLQ) and 455–607 (AELR…VDKA). Residue threonine 230 is modified to Phosphothreonine. The interval 533-719 (DAISILLKRK…SLNLRPTDKH (187 aa)) is required for localization to the centrosome and induction of aggresome formation. Residues 584–719 (HNLQKKDADL…SLNLRPTDKH (136 aa)) form a sufficient for interaction with CNTRL region. The interval 696 to 719 (LATNSRRGPLGRLASLNLRPTDKH) is disordered. The residue at position 710 (serine 710) is a Phosphoserine.

This sequence belongs to the hook family. As to quaternary structure, self-associates. Component of the FTS/Hook/FHIP complex (FHF complex), composed of AKTIP/FTS, FHIP1B, and one or more members of the Hook family of proteins HOOK1, HOOK2, and HOOK3. May interact directly with AKTIP/FTS, HOOK1 and HOOK3. Associates with several subunits of the homotypic vesicular sorting complex (the HOPS complex) including VPS16 and VPS41; these interactions may be indirect. Interacts with CNTRL. Interacts with microtubules. Interacts with ZC3H14. Interacts with LRGUK (via guanylate kinase-like domain). Interacts with CCDC181. Interacts with AP4M1; the interaction is direct, mediates the interaction between FTS-Hook-FHIP (FHF) complex and AP-4 and the perinuclear distribution of AP-4.

The protein localises to the cytoplasm. Its subcellular location is the cytoskeleton. It localises to the microtubule organizing center. It is found in the centrosome. The protein resides in the golgi apparatus. The protein localises to the trans-Golgi network. Component of the FTS/Hook/FHIP complex (FHF complex). The FHF complex may function to promote vesicle trafficking and/or fusion via the homotypic vesicular protein sorting complex (the HOPS complex). Contributes to the establishment and maintenance of centrosome function. May function in the positioning or formation of aggresomes, which are pericentriolar accumulations of misfolded proteins, proteasomes and chaperones. FHF complex promotes the distribution of AP-4 complex to the perinuclear area of the cell. This chain is Protein Hook homolog 2 (HOOK2), found in Homo sapiens (Human).